The chain runs to 325 residues: UPF0285 protein MMP0642 (325 aa).

Belongs to the UPF0285 family.

The chain is UPF0285 protein MMP0642 from Methanococcus maripaludis (strain DSM 14266 / JCM 13030 / NBRC 101832 / S2 / LL).